Consider the following 233-residue polypeptide: Fibroblast growth factor 8 (233 aa).

Positions 1 to 22 (MGSPRSALSCLLLHLLVLCLQA) are cleaved as a signal peptide. A glycan (N-linked (GlcNAc...) asparagine) is linked at asparagine 155.

This sequence belongs to the heparin-binding growth factors family. As to quaternary structure, monomer. Homodimer. Interacts with FGFR1, FGFR2, FGFR3 and FGFR4. Affinity between fibroblast growth factors (FGFs) and their receptors is increased by heparan sulfate glycosaminoglycans that function as coreceptors.

It is found in the secreted. Functionally, plays an important role in the regulation of embryonic development, cell proliferation, cell differentiation and cell migration. Required for normal brain, eye, ear and limb development during embryogenesis. Required for normal development of the gonadotropin-releasing hormone (GnRH) neuronal system. Plays a role in neurite outgrowth in hippocampal cells. In Homo sapiens (Human), this protein is Fibroblast growth factor 8 (FGF8).